We begin with the raw amino-acid sequence, 152 residues long: UPF0225 protein YchJ (152 aa).

This sequence belongs to the UPF0225 family.

The chain is UPF0225 protein YchJ from Escherichia coli O81 (strain ED1a).